The following is a 271-amino-acid chain: Tryptophan synthase alpha chain (271 aa).

Active-site proton acceptor residues include Glu-51 and Asp-62.

It belongs to the TrpA family. In terms of assembly, tetramer of two alpha and two beta chains.

The enzyme catalyses (1S,2R)-1-C-(indol-3-yl)glycerol 3-phosphate + L-serine = D-glyceraldehyde 3-phosphate + L-tryptophan + H2O. It participates in amino-acid biosynthesis; L-tryptophan biosynthesis; L-tryptophan from chorismate: step 5/5. The alpha subunit is responsible for the aldol cleavage of indoleglycerol phosphate to indole and glyceraldehyde 3-phosphate. The chain is Tryptophan synthase alpha chain from Prochlorococcus marinus (strain NATL2A).